We begin with the raw amino-acid sequence, 178 residues long: ATP-dependent protease subunit HslV (178 aa).

Thr7 is a catalytic residue. The Na(+) site is built by Gly162, Cys165, and Thr168.

Belongs to the peptidase T1B family. HslV subfamily. A double ring-shaped homohexamer of HslV is capped on each side by a ring-shaped HslU homohexamer. The assembly of the HslU/HslV complex is dependent on binding of ATP.

Its subcellular location is the cytoplasm. The enzyme catalyses ATP-dependent cleavage of peptide bonds with broad specificity.. Its activity is regulated as follows. Allosterically activated by HslU binding. Its function is as follows. Protease subunit of a proteasome-like degradation complex believed to be a general protein degrading machinery. This is ATP-dependent protease subunit HslV from Burkholderia vietnamiensis (strain G4 / LMG 22486) (Burkholderia cepacia (strain R1808)).